Here is a 433-residue protein sequence, read N- to C-terminus: Trigger factor (433 aa).

Positions 163-248 (GDVVVLDFAA…VHAVKERRLP (86 aa)) constitute a PPIase FKBP-type domain.

Belongs to the FKBP-type PPIase family. Tig subfamily.

The protein resides in the cytoplasm. It catalyses the reaction [protein]-peptidylproline (omega=180) = [protein]-peptidylproline (omega=0). In terms of biological role, involved in protein export. Acts as a chaperone by maintaining the newly synthesized protein in an open conformation. Functions as a peptidyl-prolyl cis-trans isomerase. This is Trigger factor from Nitratidesulfovibrio vulgaris (strain DP4) (Desulfovibrio vulgaris).